The primary structure comprises 473 residues: Trehalose-6-phosphate synthase (473 aa).

Arginine 10 provides a ligand contact to D-glucose 6-phosphate. 21-22 (GG) contributes to the UDP-alpha-D-glucose binding site. Positions 76 and 130 each coordinate D-glucose 6-phosphate. UDP-alpha-D-glucose-binding residues include arginine 262 and lysine 267. Residue arginine 300 coordinates D-glucose 6-phosphate. Residues phenylalanine 339 and 365 to 369 (LVAKE) contribute to the UDP-alpha-D-glucose site. The segment at 454–473 (TPRSPERQQQNNVATFPKLA) is disordered.

The protein belongs to the glycosyltransferase 20 family. Homotetramer.

It carries out the reaction D-glucose 6-phosphate + UDP-alpha-D-glucose = alpha,alpha-trehalose 6-phosphate + UDP + H(+). Its pathway is glycan biosynthesis; trehalose biosynthesis. In terms of biological role, probably involved in the osmoprotection via the biosynthesis of trehalose. Catalyzes the transfer of glucose from UDP-alpha-D-glucose (UDP-Glc) to D-glucose 6-phosphate (Glc-6-P) to form trehalose-6-phosphate. Acts with retention of the anomeric configuration of the UDP-sugar donor. The polypeptide is Trehalose-6-phosphate synthase (Salmonella choleraesuis (strain SC-B67)).